Reading from the N-terminus, the 245-residue chain is Ribonuclease PH (245 aa).

Residues Arg-86 and Gly-124–Arg-126 contribute to the phosphate site.

It belongs to the RNase PH family. Homohexameric ring arranged as a trimer of dimers.

It catalyses the reaction tRNA(n+1) + phosphate = tRNA(n) + a ribonucleoside 5'-diphosphate. Phosphorolytic 3'-5' exoribonuclease that plays an important role in tRNA 3'-end maturation. Removes nucleotide residues following the 3'-CCA terminus of tRNAs; can also add nucleotides to the ends of RNA molecules by using nucleoside diphosphates as substrates, but this may not be physiologically important. Probably plays a role in initiation of 16S rRNA degradation (leading to ribosome degradation) during starvation. This chain is Ribonuclease PH, found in Bacillus anthracis (strain A0248).